The following is a 342-amino-acid chain: Large ribosomal subunit protein uL3 (342 aa).

The protein belongs to the universal ribosomal protein uL3 family. Part of the 50S ribosomal subunit. Forms a cluster with proteins L14 and L24e.

One of the primary rRNA binding proteins, it binds directly near the 3'-end of the 23S rRNA, where it nucleates assembly of the 50S subunit. In Pyrobaculum islandicum (strain DSM 4184 / JCM 9189 / GEO3), this protein is Large ribosomal subunit protein uL3.